The sequence spans 175 residues: Small ribosomal subunit protein uS7 (175 aa).

It belongs to the universal ribosomal protein uS7 family. In terms of assembly, part of the 30S ribosomal subunit. Contacts proteins S9 and S11.

Functionally, one of the primary rRNA binding proteins, it binds directly to 16S rRNA where it nucleates assembly of the head domain of the 30S subunit. Is located at the subunit interface close to the decoding center, probably blocks exit of the E-site tRNA. The sequence is that of Small ribosomal subunit protein uS7 from Legionella pneumophila (strain Paris).